The chain runs to 430 residues: GTPase Obg (430 aa).

In terms of domain architecture, Obg spans 1 to 158 (MFVDQVKISL…LDVSLELKLL (158 aa)). The segment at 118-145 (KGGRGGRGNSRFATPRNPAPDFSEKGEP) is disordered. The OBG-type G domain maps to 159–329 (ADVGLVGFPS…LLYAIADKLE (171 aa)). GTP-binding positions include 165–172 (GFPSVGKS), 190–194 (FTTIK), 212–215 (DLPG), 282–285 (NKMD), and 310–312 (STI). Positions 172 and 192 each coordinate Mg(2+). One can recognise an OCT domain in the interval 352–430 (KHTPSQDKFT…ILGGEFEFVE (79 aa)).

Belongs to the TRAFAC class OBG-HflX-like GTPase superfamily. OBG GTPase family. In terms of assembly, monomer. Mg(2+) serves as cofactor.

Its subcellular location is the cytoplasm. Functionally, an essential GTPase which binds GTP, GDP and possibly (p)ppGpp with moderate affinity, with high nucleotide exchange rates and a fairly low GTP hydrolysis rate. Plays a role in control of the cell cycle, stress response, ribosome biogenesis and in those bacteria that undergo differentiation, in morphogenesis control. The chain is GTPase Obg from Staphylococcus aureus (strain MRSA252).